Consider the following 680-residue polypeptide: Viral IRF2-like protein (680 aa).

A DNA-binding region (IRF tryptophan pentad repeat) is located at residues 7 to 103; the sequence is SEWLTDFIID…RPFTIYKGKM (97 aa). Disordered stretches follow at residues 156–201, 220–257, 343–365, and 403–423; these read SLRK…SENE, EEPE…HVHT, ETAS…ESVS, and ASPQ…ESVS. Residues 168 to 188 are compositionally biased toward low complexity; sequence KQAAAVATPTTSSAAEVSSRS. Positions 191 to 200 are enriched in acidic residues; sequence EDTESSDSEN. Low complexity predominate over residues 220-240; the sequence is EEPEPSGFGSSGQSSSLLAPD.

The protein belongs to the IRF family. As to quaternary structure, interacts with host EIF2AK2/PKR. Interacts with host USP7.

Its subcellular location is the host nucleus. It is found in the host cytoplasm. Functionally, DNA-binding transcription factor that plays a role in the modulation of host immune response. Acts by interacting with host EIF2AK2/PKR and inhibiting its activation. In turn, EIF2AK2/PKR substrates including EIF2S1 or histone H2A are not phosphorylated. Inhibits type I interferon signaling by targeting host IRF3 during viral reactivation from latency. Attenuates the transcriptional activity of host FOXO3 via activation of the AKT1 signaling pathway, inhibiting FOXO3-mediated apoptosis. Also suppresses the expression of viral early lytic genes in both newly infected and reactivated infected host cells allowing regulation of viral life cycle by harnessing the interferon pathway. Mechanistically, promotes host PML bodies formation as well as host antiviral restriction factors IFIT1-3 expression leading to inhibition of viral early lytic proteins. Also regulates host TRAF3 and TRAF6 ubiquitination by interacting with USP7 deubiquitinase thereby influencing TRAF3/6-mediated signal transduction. The polypeptide is Viral IRF2-like protein (vIRF-2) (Human herpesvirus 8 type P (isolate GK18) (HHV-8)).